Reading from the N-terminus, the 492-residue chain is Glycogen synthase 1 (492 aa).

Residue Lys-15 coordinates ADP-alpha-D-glucose.

Belongs to the glycosyltransferase 1 family. Bacterial/plant glycogen synthase subfamily.

The enzyme catalyses [(1-&gt;4)-alpha-D-glucosyl](n) + ADP-alpha-D-glucose = [(1-&gt;4)-alpha-D-glucosyl](n+1) + ADP + H(+). Its pathway is glycan biosynthesis; glycogen biosynthesis. In terms of biological role, synthesizes alpha-1,4-glucan chains using ADP-glucose. This chain is Glycogen synthase 1, found in Trichormus variabilis (strain ATCC 29413 / PCC 7937) (Anabaena variabilis).